The sequence spans 125 residues: Large ribosomal subunit protein bL12 (125 aa).

This sequence belongs to the bacterial ribosomal protein bL12 family. In terms of assembly, homodimer. Part of the ribosomal stalk of the 50S ribosomal subunit. Forms a multimeric L10(L12)X complex, where L10 forms an elongated spine to which 2 to 4 L12 dimers bind in a sequential fashion. Binds GTP-bound translation factors.

Forms part of the ribosomal stalk which helps the ribosome interact with GTP-bound translation factors. Is thus essential for accurate translation. This is Large ribosomal subunit protein bL12 from Methylorubrum extorquens (strain CM4 / NCIMB 13688) (Methylobacterium extorquens).